Consider the following 85-residue polypeptide: Conotoxin Mi15b (85 aa).

Positions Met1–Ser23 are cleaved as a signal peptide. The propeptide occupies Asp24–Arg49. Position 50 is a pyrrolidone carboxylic acid (Gln50).

The protein belongs to the conotoxin O2 superfamily. In terms of processing, contains 4 disulfide bonds. As to expression, expressed by the venom duct.

The protein localises to the secreted. This is Conotoxin Mi15b from Conus miles (Soldier cone).